We begin with the raw amino-acid sequence, 236 residues long: Biosynthetic peptidoglycan transglycosylase (236 aa).

The helical transmembrane segment at 12 to 31 threads the bilayer; the sequence is ALLWFAAGSVLVVLVLRWVP.

Belongs to the glycosyltransferase 51 family.

Its subcellular location is the cell inner membrane. It carries out the reaction [GlcNAc-(1-&gt;4)-Mur2Ac(oyl-L-Ala-gamma-D-Glu-L-Lys-D-Ala-D-Ala)](n)-di-trans,octa-cis-undecaprenyl diphosphate + beta-D-GlcNAc-(1-&gt;4)-Mur2Ac(oyl-L-Ala-gamma-D-Glu-L-Lys-D-Ala-D-Ala)-di-trans,octa-cis-undecaprenyl diphosphate = [GlcNAc-(1-&gt;4)-Mur2Ac(oyl-L-Ala-gamma-D-Glu-L-Lys-D-Ala-D-Ala)](n+1)-di-trans,octa-cis-undecaprenyl diphosphate + di-trans,octa-cis-undecaprenyl diphosphate + H(+). Its pathway is cell wall biogenesis; peptidoglycan biosynthesis. Its function is as follows. Peptidoglycan polymerase that catalyzes glycan chain elongation from lipid-linked precursors. The chain is Biosynthetic peptidoglycan transglycosylase from Pseudomonas savastanoi pv. phaseolicola (strain 1448A / Race 6) (Pseudomonas syringae pv. phaseolicola (strain 1448A / Race 6)).